A 167-amino-acid polypeptide reads, in one-letter code: Endoribonuclease YbeY (167 aa).

Residues 64-101 (GKPTNVLSWPSEERASEEPGMAPEPPEPGDPEDPEPLG) form a disordered region. The segment covering 90–99 (EPGDPEDPEP) has biased composition (acidic residues). Zn(2+)-binding residues include His131, His135, and His141.

The protein belongs to the endoribonuclease YbeY family. The cofactor is Zn(2+).

It is found in the cytoplasm. In terms of biological role, single strand-specific metallo-endoribonuclease involved in late-stage 70S ribosome quality control and in maturation of the 3' terminus of the 16S rRNA. The chain is Endoribonuclease YbeY from Cereibacter sphaeroides (strain ATCC 17023 / DSM 158 / JCM 6121 / CCUG 31486 / LMG 2827 / NBRC 12203 / NCIMB 8253 / ATH 2.4.1.) (Rhodobacter sphaeroides).